The primary structure comprises 157 residues: S-ribosylhomocysteine lyase (157 aa).

Fe cation contacts are provided by histidine 54, histidine 58, and cysteine 126.

It belongs to the LuxS family. As to quaternary structure, homodimer. The cofactor is Fe cation.

It carries out the reaction S-(5-deoxy-D-ribos-5-yl)-L-homocysteine = (S)-4,5-dihydroxypentane-2,3-dione + L-homocysteine. In terms of biological role, involved in the synthesis of autoinducer 2 (AI-2) which is secreted by bacteria and is used to communicate both the cell density and the metabolic potential of the environment. The regulation of gene expression in response to changes in cell density is called quorum sensing. Catalyzes the transformation of S-ribosylhomocysteine (RHC) to homocysteine (HC) and 4,5-dihydroxy-2,3-pentadione (DPD). The polypeptide is S-ribosylhomocysteine lyase (Bacillus anthracis (strain A0248)).